The sequence spans 470 residues: Acetyl-CoA decarbonylase/synthase complex subunit gamma (470 aa).

The region spanning methionine 1–glutamate 62 is the 4Fe-4S domain. Residues cysteine 18, cysteine 21, cysteine 26, and cysteine 43 each coordinate [4Fe-4S] cluster.

Heterodimer of delta and gamma chains. The ACDS complex is made up of alpha, epsilon, beta, gamma and delta chains with a probable stoichiometry of (alpha(2)epsilon(2))(4)-beta(8)-(gamma(1)delta(1))(8). Corrinoid serves as cofactor. Requires [4Fe-4S] cluster as cofactor.

It catalyses the reaction 5,6,7,8-tetrahydrosarcinapterin + methyl-Co(III)-[corrinoid Fe-S protein] = 5-methyltetrahydrosarcinapterin + Co(I)-[corrinoid Fe-S protein] + H(+). In terms of biological role, part of a complex that catalyzes the reversible cleavage of acetyl-CoA, allowing autotrophic growth from CO(2). This Archaeoglobus fulgidus (strain ATCC 49558 / DSM 4304 / JCM 9628 / NBRC 100126 / VC-16) protein is Acetyl-CoA decarbonylase/synthase complex subunit gamma.